Reading from the N-terminus, the 243-residue chain is uncharacterized protein (243 aa).

Basic and acidic residues-rich tracts occupy residues 1-11 (MSDEGYRELVE) and 167-178 (RNRDPPRPSYLR). Disordered regions lie at residues 1 to 26 (MSDEGYRELVESKSAPTTPGPWSPDR) and 146 to 243 (ELYQ…CWPF). Over residues 185-200 (STTTARRPRAMTSTPE) the composition is skewed to low complexity.

This is an uncharacterized protein from Canis lupus familiaris (Dog).